Reading from the N-terminus, the 105-residue chain is Flagellar transcriptional regulator FlhD (105 aa).

This sequence belongs to the FlhD family. Homodimer; disulfide-linked. Forms a heterohexamer composed of two FlhC and four FlhD subunits. Each FlhC binds a FlhD dimer, forming a heterotrimer, and a hexamer assembles by dimerization of two heterotrimers.

The protein localises to the cytoplasm. Functionally, functions in complex with FlhC as a master transcriptional regulator that regulates transcription of several flagellar and non-flagellar operons by binding to their promoter region. Activates expression of class 2 flagellar genes, including fliA, which is a flagellum-specific sigma factor that turns on the class 3 genes. Also regulates genes whose products function in a variety of physiological pathways. This is Flagellar transcriptional regulator FlhD from Cupriavidus necator (strain ATCC 17699 / DSM 428 / KCTC 22496 / NCIMB 10442 / H16 / Stanier 337) (Ralstonia eutropha).